Reading from the N-terminus, the 328-residue chain is MAEQSQLKNLTIILLLLCLSFQSLSFAAESHLTVDFYSKSCPKFLDIIRETITNKQISTPTTAAAALRLFFHDCFPNGCDASVLVSSTAFNTAERDSSINLSLPGDGFDVVIRAKTALELACPNTVSCSDIIAVAVRDLLVTVGGPYYEISLGRRDSRTSKSSLVSDLLPLPSMQISKLIDQFSSRGFSVQEMVALSGAHTIGFSHCKEFTNRVNPNNSTGYNPRFAVALKKACSNSKNDPTISVFNDVMTPNKFDNMYFQNIPKGLGLLESDHGLFSDPRTRPFVELYARDQSRFFNDFAGAMQKLSLHGVLTGRRGEIRRRCDAIN.

Positions 1 to 27 are cleaved as a signal peptide; the sequence is MAEQSQLKNLTIILLLLCLSFQSLSFA. 4 disulfides stabilise this stretch: cysteine 41–cysteine 122, cysteine 74–cysteine 79, cysteine 128–cysteine 324, and cysteine 207–cysteine 234. The Proton acceptor role is filled by histidine 72. Ca(2+)-binding residues include aspartate 73, glycine 78, aspartate 80, and serine 82. Position 170 (proline 170) interacts with substrate. Heme b is bound at residue histidine 200. Threonine 201 is a binding site for Ca(2+). N-linked (GlcNAc...) asparagine glycans are attached at residues asparagine 217 and asparagine 218. 3 residues coordinate Ca(2+): aspartate 248, threonine 251, and aspartate 256.

Belongs to the peroxidase family. Classical plant (class III) peroxidase subfamily. The cofactor is heme b. It depends on Ca(2+) as a cofactor.

The protein resides in the secreted. It carries out the reaction 2 a phenolic donor + H2O2 = 2 a phenolic radical donor + 2 H2O. Removal of H(2)O(2), oxidation of toxic reductants, biosynthesis and degradation of lignin, suberization, auxin catabolism, response to environmental stresses such as wounding, pathogen attack and oxidative stress. These functions might be dependent on each isozyme/isoform in each plant tissue. This Arabidopsis thaliana (Mouse-ear cress) protein is Peroxidase 63 (PER63).